Here is a 102-residue protein sequence, read N- to C-terminus: UPF0213 protein Ent638_3592 (102 aa).

Residues 4–79 (VCWFLYLVRT…KQLTKRQKER (76 aa)) form the GIY-YIG domain.

The protein belongs to the UPF0213 family.

The chain is UPF0213 protein Ent638_3592 from Enterobacter sp. (strain 638).